The following is a 168-amino-acid chain: uncharacterized protein (168 aa).

Disordered stretches follow at residues 1–81 and 119–150; these read MSSA…GRSW and RDLSESASTGSENLSRKASNQSQSQGRLSTVA. Positions 7 to 34 are enriched in low complexity; that stretch reads SRTSRSKATGASSSSISSSIRASPSSSS. Positions 43–67 are enriched in basic residues; sequence TRRRRRRTGRRSTKRSIISPRRRRM. A compositionally biased stretch (polar residues) spans 123–146; the sequence is ESASTGSENLSRKASNQSQSQGRL.

This is an uncharacterized protein from Human adenovirus C serotype 2 (HAdV-2).